Here is a 623-residue protein sequence, read N- to C-terminus: Chaperone protein HtpG (623 aa).

An a; substrate-binding region spans residues 1-330; that stretch reads MIMTQEKKKF…SEDLPLNISR (330 aa). The b stretch occupies residues 331 to 546; that stretch reads ESLQHNSVLE…DAAMDIRMER (216 aa). Residues 477-497 form a disordered region; it reads SDIDVEQTTSQSEEKNTDSKK. The segment covering 488 to 497 has biased composition (basic and acidic residues); the sequence is SEEKNTDSKK. The c stretch occupies residues 547–623; it reads FLIEQKQIAN…LNDIVQKAIL (77 aa).

It belongs to the heat shock protein 90 family. As to quaternary structure, homodimer.

Its subcellular location is the cytoplasm. Functionally, molecular chaperone. Has ATPase activity. The chain is Chaperone protein HtpG from Rickettsia massiliae (strain Mtu5).